We begin with the raw amino-acid sequence, 311 residues long: Formimidoylglutamase (311 aa).

Residues H122, D151, H153, D155, C242, and D244 each coordinate Mn(2+).

It belongs to the arginase family. Mn(2+) serves as cofactor.

The enzyme catalyses N-formimidoyl-L-glutamate + H2O = formamide + L-glutamate. The protein operates within amino-acid degradation; L-histidine degradation into L-glutamate; L-glutamate from N-formimidoyl-L-glutamate (hydrolase route): step 1/1. In terms of biological role, catalyzes the conversion of N-formimidoyl-L-glutamate to L-glutamate and formamide. The protein is Formimidoylglutamase of Pseudomonas aeruginosa (strain UCBPP-PA14).